The sequence spans 1252 residues: MSSDVSQYTIGGVKIMFPCKAYPSQLAMMNAIVKGLNNRQHCLLESPTGSGKSLALLCSALSWQQSLYEKSLLKSSCEKEDREPAASLPCRCVCHSRSESSEATAGASHGAACSNNYETGGSVKHGDQLSDTECKENNTLASKLSAKKRASACGNECDDFQVERKRIRPLETEQQVRKRHCFSKEVQLVDALEVYNQRKNGELIVHSEKSVKNTSPQTLFSSCTECSCSSGKETRKDSGNTKKKANGDQTFIPKIFFGTRTHKQIAQITRELKRTAYSGVPMTILSSRDYTCIHPVVSSSNSNRNELCVELLEGKHGKSCLYYHGVHKLSEHYALQSAHNTYQAWDIEDLVSLGKKLRACPYFAARELMVGADIVFCPYNYLLDPQIRESMEINLKGQVVILDEAHNIEDSAREAVSYSVTESQLNAAREELDFMVNNNIRQKDHEQLRAMCCSLTNWLRESSSQLVETGYETSCKVWSGKEMLNHFHDMGITNISFPILQKHLSAVLEKEEKISMFGKEELVEIPIVSSATQIVLKGLFMVLLYLFKDNSRFADDYRVALQQTYAWTNDNQPDVSDTSAFFTKTKHKRNLRHKTVVHMLNFWCLNPAVAFSDLNDVRTVVLTSGTLSPMDSFSSELGVKFSIQLEANHVIRNSQVWVGTIGTGPNGRKLCATFQHTETFEFQDEVGALLLSVCQKVGQGILCFLPSYKLLDKLKDRWIHTGLWRNLELVKTVIAEPQGGAKSDFDELLKIYYDAIKFKGEKDGALLIAVCRGKVSEGLDFCDENARAVITIGIPFPNVKDLQVELKRKYNDQHKTTRGLLPGSQWYEIQAYRALNQALGRCIRHRSDWGALILVDDRFRNNPNKYITGLSKWIRQQVQHHENFGSALESLHAFAERNQKGIDFSSQCSNEVFHVPLNSKEPSSASQQEATIHLSPDVPVKSEEQSFVPETHLTTTINSINPGPSNQPGGQKVDVESCSHNGIQRRKHMDSTPRRPANKTEKKSDRTNSDFMKEHCCFKPLTSTPLPVATNCVSTASSKQRKNVNSASELIGGVNQCQSSFTLEHKPSIPESHLETTNFSVKSTEAPVAEEHLDEQKLQIEPCSELPSVGGRPELSVLEISAEDEDESLYFTPELYDDAESEEQEMRPLDPDENQIECGKPTVADDLFVISTSKTLSEPKEMINDDGRNTSLHGTMLSDISKNSTVNIEKMTNGEEAEQVESQEVDTKKRKISLSRSRNKGVSPFLLDSTST.

The region spanning 11–452 (GGVKIMFPCK…KDHEQLRAMC (442 aa)) is the Helicase ATP-binding domain. The Nuclear localization signal motif lies at 164-181 (RKRIRPLETEQQVRKRHC). 191–198 (ALEVYNQR) is a binding site for ATP. 4 residues coordinate [4Fe-4S] cluster: Cys-292, Cys-308, Cys-320, and Cys-360. A DEAH box motif is present at residues 403 to 406 (DEAH). Disordered regions lie at residues 919 to 1008 (SKEP…DRTN) and 1212 to 1252 (TNGE…STST). Polar residues-rich tracts occupy residues 920 to 930 (KEPSSASQQEA) and 952 to 969 (HLTT…NQPG). Residues 989 to 1008 (MDSTPRRPANKTEKKSDRTN) show a composition bias toward basic and acidic residues. The span at 1215–1224 (EEAEQVESQE) shows a compositional bias: acidic residues. A compositionally biased stretch (basic residues) spans 1228-1239 (KKRKISLSRSRN).

It belongs to the DEAD box helicase family. DEAH subfamily. [4Fe-4S] cluster is required as a cofactor.

The protein localises to the nucleus. It carries out the reaction Couples ATP hydrolysis with the unwinding of duplex DNA at the replication fork by translocating in the 5'-3' direction. This creates two antiparallel DNA single strands (ssDNA). The leading ssDNA polymer is the template for DNA polymerase III holoenzyme which synthesizes a continuous strand.. The catalysed reaction is ATP + H2O = ADP + phosphate + H(+). DNA-dependent helicase and 5' to 3' DNA helicase required for the maintenance of chromosomal stability. Involved in the repair of DNA double-strand breaks by homologous recombination. Involved in the repair of abasic sites at replication forks by promoting the degradation of DNA-protein cross-links: acts by catalyzing unfolding of HMCES DNA-protein cross-link via its helicase activity, exposing the underlying DNA and enabling cleavage of the DNA-protein adduct by the SPRTN metalloprotease. In Gallus gallus (Chicken), this protein is Fanconi anemia group J protein homolog (BRIP1).